An 82-amino-acid chain; its full sequence is UPF0298 protein SMU_1670c (82 aa).

It belongs to the UPF0298 family.

It is found in the cytoplasm. The protein is UPF0298 protein SMU_1670c of Streptococcus mutans serotype c (strain ATCC 700610 / UA159).